Consider the following 240-residue polypeptide: MQIFPAIDLKNGQCVRLFQGDFSKKTVVNEDPIAQAKAFATDGATYLHIVDLDGALEGRPINLEIIQRMKKAAKIPVQVGGGIRSMAQVDYYLESGIDRVIIGSAALTDPDFLRAAVQKYGAKIVAGIDAKNGFVATRGWLDVSQVSYLDLAKRMEKVGVETIIYTDISRDGTLTGPNLEQMANLKEHVKVSLIASGGVSSRADLEALAQLGLYGAIAGKALYNHDISMSDIVEVEQIAY.

D8 functions as the Proton acceptor in the catalytic mechanism. D129 acts as the Proton donor in catalysis.

The protein belongs to the HisA/HisF family.

The protein localises to the cytoplasm. It carries out the reaction 1-(5-phospho-beta-D-ribosyl)-5-[(5-phospho-beta-D-ribosylamino)methylideneamino]imidazole-4-carboxamide = 5-[(5-phospho-1-deoxy-D-ribulos-1-ylimino)methylamino]-1-(5-phospho-beta-D-ribosyl)imidazole-4-carboxamide. The protein operates within amino-acid biosynthesis; L-histidine biosynthesis; L-histidine from 5-phospho-alpha-D-ribose 1-diphosphate: step 4/9. The polypeptide is 1-(5-phosphoribosyl)-5-[(5-phosphoribosylamino)methylideneamino] imidazole-4-carboxamide isomerase (Listeria monocytogenes serotype 4b (strain CLIP80459)).